The chain runs to 61 residues: Small ribosomal subunit protein uS14 (61 aa).

Zn(2+)-binding residues include C24, C27, C40, and C43.

This sequence belongs to the universal ribosomal protein uS14 family. Zinc-binding uS14 subfamily. Part of the 30S ribosomal subunit. Contacts proteins S3 and S10. Zn(2+) is required as a cofactor.

Binds 16S rRNA, required for the assembly of 30S particles and may also be responsible for determining the conformation of the 16S rRNA at the A site. The chain is Small ribosomal subunit protein uS14 from Leptospira borgpetersenii serovar Hardjo-bovis (strain JB197).